A 274-amino-acid chain; its full sequence is Ribose-5-phosphate isomerase (274 aa).

The protein belongs to the ribose 5-phosphate isomerase family.

It localises to the cytoplasm. It carries out the reaction aldehydo-D-ribose 5-phosphate = D-ribulose 5-phosphate. Its pathway is carbohydrate degradation; pentose phosphate pathway; D-ribose 5-phosphate from D-ribulose 5-phosphate (non-oxidative stage): step 1/1. The chain is Ribose-5-phosphate isomerase (RKI1) from Kluyveromyces lactis (strain ATCC 8585 / CBS 2359 / DSM 70799 / NBRC 1267 / NRRL Y-1140 / WM37) (Yeast).